The primary structure comprises 190 residues: Putative manganese efflux pump MntP (190 aa).

The next 6 helical transmembrane spans lie at 6 to 26 (IWLLAISLAMDCFTVSITSGI), 36 to 56 (FFIMAFFFGLFQAVMPLIGWF), 61 to 81 (FSHLIEDYDHWIAFGLLAFWG), 108 to 128 (LAIATSIDALAIGISFAFVGI), 138 to 158 (IVIIGFTSFVISTLGSLIGVF), and 169 to 189 (LWGGLVLIIIGVKILIEHLFL).

The protein belongs to the MntP (TC 9.B.29) family.

It is found in the cell inner membrane. Its function is as follows. Probably functions as a manganese efflux pump. The protein is Putative manganese efflux pump MntP of Phocaeicola vulgatus (strain ATCC 8482 / DSM 1447 / JCM 5826 / CCUG 4940 / NBRC 14291 / NCTC 11154) (Bacteroides vulgatus).